A 202-amino-acid polypeptide reads, in one-letter code: Small ribosomal subunit protein uS4c (202 aa).

Residues 90–153 enclose the S4 RNA-binding domain; that stretch reads MRLDNIIFRL…KSQAIISKNL (64 aa).

Belongs to the universal ribosomal protein uS4 family. Part of the 30S ribosomal subunit. Contacts protein S5. The interaction surface between S4 and S5 is involved in control of translational fidelity.

The protein localises to the plastid. The protein resides in the chloroplast. Its function is as follows. One of the primary rRNA binding proteins, it binds directly to 16S rRNA where it nucleates assembly of the body of the 30S subunit. Functionally, with S5 and S12 plays an important role in translational accuracy. The protein is Small ribosomal subunit protein uS4c (rps4) of Rosulabryum capillare (Capillary thread-moss).